The primary structure comprises 636 residues: Probable potassium transport system protein Kup (636 aa).

Helical transmembrane passes span 22-42 (MGLL…SPLY), 64-84 (ILSL…VMFI), 114-134 (ALMV…SMIT), 150-170 (FEGI…ALFL), 182-202 (LFGP…VHGI), 220-240 (FFIV…LALT), 261-281 (WFAL…AILL), 293-313 (LLAP…ATVI), 351-371 (IYIG…VIGF), 383-403 (VAVT…MLLL), 408-428 (PVLA…FFAA), and 433-453 (IVQG…LMST).

This sequence belongs to the HAK/KUP transporter (TC 2.A.72) family.

It is found in the cell inner membrane. It catalyses the reaction K(+)(in) + H(+)(in) = K(+)(out) + H(+)(out). Functionally, transport of potassium into the cell. Likely operates as a K(+):H(+) symporter. This chain is Probable potassium transport system protein Kup, found in Pseudomonas entomophila (strain L48).